The following is a 300-amino-acid chain: ETS homologous factor (300 aa).

The PNT domain maps to 29 to 115 (STCNVSSGFF…SNLQHLKWNG (87 aa)). A disordered region spans residues 183–202 (ESPDMKKEQDPPAKCHTKKH). The segment covering 185–195 (PDMKKEQDPPA) has biased composition (basic and acidic residues). Residues 207-289 (THLWEFIRDI…DGRRLVYKFG (83 aa)) constitute a DNA-binding region (ETS).

Belongs to the ETS family. As to expression, expressed exclusively in tissues with a high content of epithelial cells. Highly expressed in salivary gland, mammary gland, prostate, and lung. Weakly expressed in kidney and colon. Not detected in heart, brain, placenta, liver, skeletal muscle, spleen, thymus, testis, ovary, small intestine or peripheral blood leukocytes.

It localises to the nucleus. Its function is as follows. Transcriptional activator that may play a role in regulating epithelial cell differentiation and proliferation. May act as a repressor for a specific subset of ETS/AP-1-responsive genes and as a modulator of the nuclear response to mitogen-activated protein kinase signaling cascades. Binds to DNA sequences containing the consensus nucleotide core sequence GGAA. Involved in regulation of TNFRSF10B/DR5 expression through Ets-binding sequences on the TNFRSF10B/DR5 promoter. May contribute to development and carcinogenesis by acting as a tumor suppressor gene or anti-oncogene. This chain is ETS homologous factor, found in Homo sapiens (Human).